Reading from the N-terminus, the 1141-residue chain is Envelopment polyprotein (1141 aa).

The N-terminal stretch at 1–18 (MGRLYLIVLGVLITATAG) is a signal peptide. Over 19 to 483 (FPRSVHELKI…HSLAVELCVP (465 aa)) the chain is Lumenal. Intrachain disulfides connect Cys30-Cys158, Cys64-Cys164, Cys113-Cys135, Cys140-Cys145, Cys182-Cys192, Cys217-Cys253, Cys242-Cys357, Cys382-Cys441, Cys386-Cys395, and Cys458-Cys481. Asn141 is a glycosylation site (N-linked (GlcNAc...) asparagine; by host). An N-linked (GlcNAc...) asparagine; by host glycan is attached at Asn353. Asn405 carries an N-linked (GlcNAc...) asparagine; by host glycan. Residues 484–506 (GIHGWATIALVITFCFGWLLIPT) traverse the membrane as a helical segment. At 507–633 (TTMVVLKCLR…LGVFRYKSRC (127 aa)) the chain is on the cytoplasmic side. Residues 522–539 (CSHYSTESKFKVILEKVK) form a binding to the ribonucleoprotein region. CCHC-type zinc fingers lie at residues 551 to 571 (CDIC…KKSC) and 576 to 597 (CPYC…YAVC). Binding to the ribonucleoprotein regions lie at residues 594-611 (YAVC…KKSL), 598-609 (KLTGRFHEALKK), and 617-631 (QRGC…RYKS). The ITAM domain maps to 617-640 (QRGCYRTLGVFRYKSRCYVGLVWM). 2 positions are modified to phosphotyrosine: Tyr621 and Tyr634. Residues 621–624 (YRTL) carry the YxxL motif. The helical transmembrane segment at 634–654 (YVGLVWMCLLTLELIVWAASA) threads the bilayer. Topologically, residues 655–1110 (DTPLLEPGWS…EWLLGILNGN (456 aa)) are lumenal. 8 disulfides stabilise this stretch: Cys741/Cys776, Cys745/Cys783, Cys757/Cys890, Cys771/Cys901, Cys786/Cys909, Cys812/Cys821, Cys829/Cys838, and Cys869/Cys873. Positions 763-783 (YQYETSWSCNPPDCPGVGTGC) are fusion loop. A glycan (N-linked (GlcNAc...) asparagine; by host) is linked at Asn933. 5 disulfide bridges follow: Cys975-Cys1005, Cys998-Cys1050, Cys1015-Cys1020, Cys1051-Cys1056, and Cys1090-Cys1094. A helical transmembrane segment spans residues 1111–1131 (WVVVAVLVIILLISIFLFSFF). The tract at residues 1127 to 1141 (LFSFFCPIRSHKKQL) is binding to the ribonucleoprotein. Residues 1132–1141 (CPIRSHKKQL) are Cytoplasmic-facing.

Belongs to the hantavirus envelope glycoprotein family. In terms of assembly, homodimer. Homotetramer; forms heterotetrameric Gn-Gc spikes in the pre-fusion conformation. Interacts (via C-terminus) with the nucleoprotein. Interacts with host TUFM; this interaction contributes to the virus-induced degradation of mitochondria by autophagy, which leads to degradation of host MAVS and inhibition of type I interferon (IFN) responses. Interacts with host MAP1LC3B; this interaction contributes to the virus-induced degradation of mitochondria by autophagy, which leads to degradation of host MAVS and inhibition of type I interferon (IFN) responses. Homodimer. Homotetramer; forms heterotetrameric Gn-Gc spikes in the pre-fusion conformation. Homotrimer; forms homotrimer in the post-fusion conformation at acidic pH. Interacts (via C-terminus) with the nucleoprotein. Post-translationally, envelope polyprotein precursor is quickly cleaved in vivo just after synthesis, presumably by host signal peptidase.

The protein localises to the virion membrane. Its subcellular location is the host cell surface. The protein resides in the host Golgi apparatus membrane. It localises to the host endoplasmic reticulum membrane. It is found in the host mitochondrion. Its function is as follows. Forms homotetramers with glycoprotein C at the surface of the virion. Attaches the virion to host cell receptors including integrin ITGAV/ITGB3. This attachment induces virion internalization predominantly through clathrin-dependent endocytosis. Mediates the assembly and budding of infectious virus particles through its interaction with the nucleocapsid protein and the viral genome. May dysregulate normal immune and endothelial cell responses through an ITAM motif. Translocates to mitochondria, binds to host TUFM and recruits MAP1LC3B. These interactions induce mitochondrial autophagy and therefore destruction of host MAVS leading to inhibition of type I interferon (IFN) responses. Concomitant breakdown of glycoprotein N is apparently prevented by the nucleoprotein that may inhibit Gn-stimulated autophagosome-lysosome fusion. Interacts with the viral genomic RNA. In terms of biological role, forms homotetramers with glycoprotein N at the surface of the virion. Attaches the virion to host cell receptors including integrin ITGAV/ITGB3. This attachment induces virion internalization predominantly through clathrin-dependent endocytosis. Class II fusion protein that promotes fusion of viral membrane with host endosomal membrane after endocytosis of the virion. The polypeptide is Envelopment polyprotein (GP) (Homo sapiens (Human)).